A 299-amino-acid polypeptide reads, in one-letter code: Prohibitin-2 (299 aa).

Ala-2 is modified (N-acetylalanine). A necessary for transcriptional repression region spans residues 19 to 49 (MGTALKLLLGAGAVAYGVRESVFTVEGGHRA). The residue at position 128 (Tyr-128) is a Phosphotyrosine. Lys-147 carries the post-translational modification N6-acetyllysine. Positions 150–174 (ASQLITQRAQVSLLIRRELTERAKD) are necessary for transcriptional repression. At Ser-151 the chain carries Phosphoserine. Residues 190 to 238 (SREYTAAVEAKQVAQQEAQRAQFLVEKAKQEQRQKIVQAEGEAEAAKML) are a coiled coil. N6-acetyllysine occurs at positions 200, 236, 250, and 262.

This sequence belongs to the prohibitin family. In terms of assembly, the mitochondrial prohibitin complex consists of two subunits (PHB1 and PHB2), assembled into a membrane-associated ring-shaped supercomplex of approximately 1 mDa. Interacts with ESR1, HDAC1 and HDAC5. Interacts with ZNF703. Interacts with STOML2. Interacts with ARFGEF3. Interacts with SPHK2. Interacts with COX4I1; the interaction associates PHB2 with COX. Interacts with MAP1LC3B (membrane-bound form LC3-II); the interaction is direct and upon mitochondrial depolarization and proteasome-dependent outer membrane rupture. Interacts with IGFBP6 (via C-terminal domain). Interacts with CLPB. Interacts with CD86 (via cytoplasmic domain); the interactions increases after priming with CD40. Interacts with AFG3L2. Interacts with DNAJC19. Interacts with AKT2; this interaction may be important for myogenic differentiation. Post-translationally, phosphorylated. Tyrosine phosphorylation is indirectly stimulated by IGFBP6. Widely expressed in different tissues.

The protein localises to the mitochondrion inner membrane. It is found in the cytoplasm. Its subcellular location is the nucleus. The protein resides in the cell membrane. Protein with pleiotropic attributes mediated in a cell-compartment- and tissue-specific manner, which include the plasma membrane-associated cell signaling functions, mitochondrial chaperone, and transcriptional co-regulator of transcription factors and sex steroid hormones in the nucleus. Functionally, in the mitochondria, together with PHB, forms large ring complexes (prohibitin complexes) in the inner mitochondrial membrane (IMM) and functions as a chaperone protein that stabilizes mitochondrial respiratory enzymes and maintains mitochondrial integrity in the IMM, which is required for mitochondrial morphogenesis, neuronal survival, and normal lifespan. The prohibitin complex, with DNAJC19, regulates cardiolipin remodeling and the protein turnover of OMA1 in a cardiolipin-binding manner. Also regulates cytochrome-c oxidase assembly (COX) and mitochondrial respiration. Binding to sphingoid 1-phosphate (SPP) modulates its regulator activity. Has a key role of mitophagy receptor involved in targeting mitochondria for autophagic degradation. Involved in mitochondrial-mediated antiviral innate immunity, activates RIG-I-mediated signal transduction and production of IFNB1 and pro-inflammatory cytokine IL6. In terms of biological role, in the nucleus, serves as transcriptional co-regulator. Acts as a mediator of transcriptional repression by nuclear hormone receptors via recruitment of histone deacetylases. Functions as an estrogen receptor (ER)-selective coregulator that potentiates the inhibitory activities of antiestrogens and represses the activity of estrogens. Competes with NCOA1 for modulation of ER transcriptional activity. Its function is as follows. In the plasma membrane, is involved in IGFBP6-induced cell migration. Cooperates with CD86 to mediate CD86-signaling in B lymphocytes that regulates the level of IgG1 produced through the activation of distal signaling intermediates. Upon CD40 engagement, required to activate NF-kappa-B signaling pathway via phospholipase C and protein kinase C activation. The sequence is that of Prohibitin-2 from Mus musculus (Mouse).